Here is a 90-residue protein sequence, read N- to C-terminus: ATP synthase subunit c (90 aa).

2 helical membrane-spanning segments follow: residues 17-37 (PLAY…AGVV) and 70-90 (LAIV…IIFV).

It belongs to the ATPase C chain family. As to quaternary structure, F-type ATPases have 2 components, F(1) - the catalytic core - and F(0) - the membrane proton channel. F(1) has five subunits: alpha(3), beta(3), gamma(1), delta(1), epsilon(1). F(0) has three main subunits: a(1), b(2) and c(10-14). The alpha and beta chains form an alternating ring which encloses part of the gamma chain. F(1) is attached to F(0) by a central stalk formed by the gamma and epsilon chains, while a peripheral stalk is formed by the delta and b chains.

The protein resides in the cell membrane. Its function is as follows. F(1)F(0) ATP synthase produces ATP from ADP in the presence of a proton or sodium gradient. F-type ATPases consist of two structural domains, F(1) containing the extramembraneous catalytic core and F(0) containing the membrane proton channel, linked together by a central stalk and a peripheral stalk. During catalysis, ATP synthesis in the catalytic domain of F(1) is coupled via a rotary mechanism of the central stalk subunits to proton translocation. In terms of biological role, key component of the F(0) channel; it plays a direct role in translocation across the membrane. A homomeric c-ring of between 10-14 subunits forms the central stalk rotor element with the F(1) delta and epsilon subunits. This Metamycoplasma arthritidis (strain 158L3-1) (Mycoplasma arthritidis) protein is ATP synthase subunit c.